The sequence spans 1556 residues: Ferredoxin-dependent glutamate synthase 2 (1556 aa).

The For GATase activity role is filled by Cys37. Residues 37 to 431 (CGVGFIANLR…PGQMIAVDLA (395 aa)) enclose the Glutamine amidotransferase type-2 domain. Positions 1173, 1179, and 1184 each coordinate [3Fe-4S] cluster. The segment at 1533 to 1556 (PSEKDSPEANGDVSLTGEKTLTSV) is disordered.

This sequence belongs to the glutamate synthase family. [3Fe-4S] cluster serves as cofactor. It depends on FAD as a cofactor. FMN is required as a cofactor.

It catalyses the reaction 2 oxidized [2Fe-2S]-[ferredoxin] + 2 L-glutamate = L-glutamine + 2 reduced [2Fe-2S]-[ferredoxin] + 2-oxoglutarate + 2 H(+). The protein operates within amino-acid biosynthesis; L-glutamate biosynthesis via GLT pathway; L-glutamate from 2-oxoglutarate and L-glutamine (ferredoxin route): step 1/1. It participates in energy metabolism; nitrogen metabolism. In Synechocystis sp. (strain ATCC 27184 / PCC 6803 / Kazusa), this protein is Ferredoxin-dependent glutamate synthase 2 (gltS).